The following is a 965-amino-acid chain: Meiosis-specific coiled-coil domain-containing protein MEIOC (965 aa).

2 disordered regions span residues 1–22 (MEVSGGDTCRPRHPQGLREGPE) and 946–965 (VHESINSSNPMNQRGETSKH). A compositionally biased stretch (polar residues) spans 949–965 (SINSSNPMNQRGETSKH).

In terms of assembly, interacts with YTHDC2; binds transcripts that regulate the mitotic cell cycle inhibiting progression into metaphase, thereby allowing meiotic prophase to proceed normally. Interacts with RBM46. As to expression, expressed specifically in fetal ovary and postnatal and adult testes (at protein level). In adult testis expressed in spermatocytes, beginning in preleptotene and extending through most stages of meiotic prophase I, including leptotene, zygotene, and pachytene.

Its subcellular location is the cytoplasm. The protein resides in the nucleus. Its function is as follows. Is required for meiosis completion in both male and female germ cells. Confers stability to numerous meiotic mRNAs in gonads allowing proper initiation and progression into meiosis prophase I. The function may involve YTHDC2 and is independent of induction by retinoic acid (RA). Maintains an extended meiotic prophase I by properly promoting the transition from a mitotic to a meiotic cell cycle program by binding transcripts through its interaction with YTHDC2 that regulate the mitotic cell cycle. The chain is Meiosis-specific coiled-coil domain-containing protein MEIOC from Mus musculus (Mouse).